We begin with the raw amino-acid sequence, 927 residues long: UPF0182 protein bll7333 (927 aa).

7 consecutive transmembrane segments (helical) span residues 17–37, 65–85, 134–154, 185–205, 220–240, 264–284, and 297–317; these read AVVG…LLAL, AVVF…NGWL, LALL…QFVY, WMML…LVHG, VIAH…WSFG, VGLP…LAAW, and AAFL…PVLF.

The protein belongs to the UPF0182 family.

It localises to the cell membrane. The sequence is that of UPF0182 protein bll7333 from Bradyrhizobium diazoefficiens (strain JCM 10833 / BCRC 13528 / IAM 13628 / NBRC 14792 / USDA 110).